Here is a 63-residue protein sequence, read N- to C-terminus: Large ribosomal subunit protein bL35 (63 aa).

This sequence belongs to the bacterial ribosomal protein bL35 family.

The protein is Large ribosomal subunit protein bL35 of Campylobacter jejuni (strain RM1221).